The following is a 233-amino-acid chain: Membrane steroid-binding protein 2 (233 aa).

The chain crosses the membrane as a helical span at residues 23 to 43 (AFFTVLALAFAVYQVVSGFFV). The Cytochrome b5 heme-binding domain occupies 70–167 (EITEEELKLY…SKYVKVGTIQ (98 aa)). Positions 70–167 (EITEEELKLY…SKYVKVGTIQ (98 aa)) are steroid-binding. 2 stretches are compositionally biased toward basic and acidic residues: residues 169-181 (KDGEGKESSEPSE) and 202-224 (THDETSRSTGEKIAETTEKKDVA). The disordered stretch occupies residues 169–233 (KDGEGKESSE…ATDDDDAAKE (65 aa)). Thr225 is modified (phosphothreonine).

The protein belongs to the cytochrome b5 family. MAPR subfamily.

It localises to the cell membrane. This chain is Membrane steroid-binding protein 2 (MSBP2), found in Arabidopsis thaliana (Mouse-ear cress).